A 261-amino-acid polypeptide reads, in one-letter code: Glutamate racemase (261 aa).

Residues 9–10 (DS) and 41–42 (YG) contribute to the substrate site. The Proton donor/acceptor role is filled by Cys-73. 74–75 (NT) serves as a coordination point for substrate. Cys-179 serves as the catalytic Proton donor/acceptor. 180–181 (TH) serves as a coordination point for substrate.

The protein belongs to the aspartate/glutamate racemases family.

The enzyme catalyses L-glutamate = D-glutamate. It functions in the pathway cell wall biogenesis; peptidoglycan biosynthesis. Functionally, provides the (R)-glutamate required for cell wall biosynthesis. In Aliivibrio fischeri (strain MJ11) (Vibrio fischeri), this protein is Glutamate racemase.